Consider the following 494-residue polypeptide: Glycosyl hydrolase family 109 protein (494 aa).

A disordered region spans residues 1–32 (MNDDARPAPEPQDIPPHSGAADEVNRQDPSRR). Residues 1–58 (MNDDARPAPEPQDIPPHSGAADEVNRQDPSRRSVLWTTAGVAGAGLGLGALGAGTASA) constitute a signal peptide (tat-type signal). NAD(+) contacts are provided by residues 104-105 (NR), Asp-126, 175-178 (WELH), 195-196 (EC), and Asn-224. Substrate is bound by residues Tyr-253, Arg-272, 284–287 (YPNH), and Tyr-366. Tyr-284 lines the NAD(+) pocket.

It belongs to the Gfo/Idh/MocA family. Glycosyl hydrolase 109 subfamily. NAD(+) serves as cofactor. In terms of processing, predicted to be exported by the Tat system. The position of the signal peptide cleavage has not been experimentally proven.

Glycosidase. The polypeptide is Glycosyl hydrolase family 109 protein (Streptomyces filamentosus (Streptomyces roseosporus)).